A 283-amino-acid chain; its full sequence is MIIDKLYENVEKKGCVCVGLDTDISYLPKGFLNKFTNIEDAIFAFNQRIVDSTFDVSACYKVQIAYYEAMGIKGMILYKKTLEYIRKKGGIVIADIKRGDISATAKMYAKAHFEGDFESDFITLNPYMGMDTLEPYKDYFKNKEKGVFLLLRTSNEGSKDIQYLDLKDNKKVYNKVGEKIENIGKEFLGNCGYSSIGAVVGCTAEENNIRKELKHTFFLIPGYGAQGGKAEVAKSYLSGGNGGIVNSSRGILLAYKKYDEEGKNFEECARNEVINMKKTLQII.

Lys97 functions as the Proton donor in the catalytic mechanism.

It belongs to the OMP decarboxylase family. Type 2 subfamily.

The enzyme catalyses orotidine 5'-phosphate + H(+) = UMP + CO2. The protein operates within pyrimidine metabolism; UMP biosynthesis via de novo pathway; UMP from orotate: step 2/2. This chain is Orotidine 5'-phosphate decarboxylase, found in Clostridium botulinum (strain ATCC 19397 / Type A).